The chain runs to 300 residues: Secreted mono- and diacylglycerol lipase LIP4 (300 aa).

Positions 1-16 are cleaved as a signal peptide; it reads MRFLAFLLCLVPLALC. C54 and C293 are oxidised to a cystine. The active-site Nucleophile is the S167. The active site involves D224.

It belongs to the AB hydrolase superfamily. Lipase family. Class 3 subfamily.

The protein localises to the secreted. It catalyses the reaction a monoacylglycerol + H2O = glycerol + a fatty acid + H(+). The enzyme catalyses a diacylglycerol + H2O = a monoacylglycerol + a fatty acid + H(+). Its function is as follows. Secreted lipase involved in Dandruff and seborrheic dermatitis (D/SD) probably via lipase-mediated breakdown of sebaceous lipids and release of irritating free fatty acids. Shows activity against monoglyceride and diglyceride substrates. Due to an absence of fatty acid synthase genes in Malassezia species, secretory lipases are essential for the yeast to generate free fatty acids from degradation of sebum and assimilate them as lipid sources for growth. Plays an essential role at the pathogen-host interface during disease progression. This Malassezia restricta (Seborrheic dermatitis infection agent) protein is Secreted mono- and diacylglycerol lipase LIP4.